A 66-amino-acid polypeptide reads, in one-letter code: MAKGKDVRIRVILECTSCVRNDLNKESRGISRYITQKNRHNTPSRLELRKFCPYCYKHTIHGEIKK.

Belongs to the bacterial ribosomal protein bL33 family.

Its subcellular location is the plastid. The protein resides in the chloroplast. This Drimys granadensis protein is Large ribosomal subunit protein bL33c.